Here is a 342-residue protein sequence, read N- to C-terminus: tRNA (guanine(26)-N(2))-dimethyltransferase (342 aa).

The Trm1 methyltransferase domain maps to 1-336 (MRITEGSAVI…CPYAEVSEIL (336 aa)). 3 residues coordinate S-adenosyl-L-methionine: Arg35, Arg60, and Glu76.

The protein belongs to the class I-like SAM-binding methyltransferase superfamily. Trm1 family.

It carries out the reaction guanosine(26) in tRNA + 2 S-adenosyl-L-methionine = N(2)-dimethylguanosine(26) in tRNA + 2 S-adenosyl-L-homocysteine + 2 H(+). Dimethylates a single guanine residue at position 26 of a number of tRNAs using S-adenosyl-L-methionine as donor of the methyl groups. This Thermoplasma volcanium (strain ATCC 51530 / DSM 4299 / JCM 9571 / NBRC 15438 / GSS1) protein is tRNA (guanine(26)-N(2))-dimethyltransferase.